Reading from the N-terminus, the 627-residue chain is Chaperone protein DnaK (627 aa).

The residue at position 197 (threonine 197) is a Phosphothreonine; by autocatalysis. The segment covering 596-615 has biased composition (low complexity); sequence MYAQGGDQGQQAAPQQEQSG. The segment at 596–627 is disordered; the sequence is MYAQGGDQGQQAAPQQEQSGDNVEDVEFEEVK. Over residues 617–627 the composition is skewed to acidic residues; the sequence is NVEDVEFEEVK.

This sequence belongs to the heat shock protein 70 family.

Functionally, acts as a chaperone. The sequence is that of Chaperone protein DnaK from Flavobacterium johnsoniae (strain ATCC 17061 / DSM 2064 / JCM 8514 / BCRC 14874 / CCUG 350202 / NBRC 14942 / NCIMB 11054 / UW101) (Cytophaga johnsonae).